A 275-amino-acid polypeptide reads, in one-letter code: Alpha-aminoadipate--LysW ligase LysX (275 aa).

Residues lysine 81, lysine 121, glycine 125 to valine 131, glutamine 161 to arginine 172, arginine 186, and asparagine 195 contribute to the ATP site. Positions threonine 85–alanine 270 constitute an ATP-grasp domain. Mg(2+)-binding residues include aspartate 230, glutamate 243, and asparagine 245. Residues asparagine 252–threonine 253 carry the N-[TS] motif that is essential for LysX substrate specificity motif.

The protein belongs to the RimK family. LysX subfamily. In terms of assembly, homodimer. It depends on Mg(2+) as a cofactor.

It carries out the reaction [amino-group carrier protein]-C-terminal-L-glutamate + L-2-aminoadipate + ATP = [amino-group carrier protein]-C-terminal-N-(1,4-dicarboxybutan-1-yl)-L-glutamine + ADP + phosphate + H(+). Its pathway is amino-acid biosynthesis; L-lysine biosynthesis via AAA pathway; L-lysine from L-alpha-aminoadipate (Thermus route): step 1/5. In terms of biological role, catalyzes the ATP-dependent formation of a covalent bond between the amino group of alpha-aminoadipate (AAA) and the gamma-carboxyl group of the C-terminal glutamate residue in LysW. The chain is Alpha-aminoadipate--LysW ligase LysX (lysX) from Saccharolobus solfataricus (strain ATCC 35092 / DSM 1617 / JCM 11322 / P2) (Sulfolobus solfataricus).